The primary structure comprises 124 residues: UPF0231 protein Shewmr7_3366 (124 aa).

It belongs to the UPF0231 family.

The sequence is that of UPF0231 protein Shewmr7_3366 from Shewanella sp. (strain MR-7).